We begin with the raw amino-acid sequence, 245 residues long: MGRLEGKVIVLTAAAQGIGRASALAFAREGAKVIATDINEAKLQELENYPGIQTRVLDVTKKRQIDQFASEIEKIDVLFNVAGFVHHGTILDCEEKDWDFSMNLNVRSMYLMIKAFLPKMLAQKSGNIINMSSVASSIKGVENRCVYSATKAAVIGLTKSVAADFIQQGIRCNCVCPGTVDTPSLQERIQARDDPKEALKAFLNRQKTGRFASAEEVALLCVYLASDESAYVTGTPVVIDGGWSL.

Residues 16–18, aspartate 37, and aspartate 58 each bind NAD(+); that span reads QGI. Position 144 (arginine 144) interacts with substrate. Tyrosine 147 serves as the catalytic Proton acceptor. Residues lysine 151 and 180-184 each bind NAD(+); that span reads VDTPS. Arginine 188 and arginine 205 together coordinate substrate.

The protein belongs to the short-chain dehydrogenases/reductases (SDR) family. As to quaternary structure, homotetramer.

The protein resides in the cytoplasm. It carries out the reaction cis-4-hydroxy-L-proline + NAD(+) = 4-oxo-L-proline + NADH + H(+). The enzyme catalyses (R)-3-hydroxybutanoate + NAD(+) = acetoacetate + NADH + H(+). It participates in amino-acid metabolism. It functions in the pathway siderophore biosynthesis. NAD(H)-dependent dehydrogenase/reductase with a preference for cyclic substrates. Catalyzes stereoselective conversion of 4-oxo-L-proline to cis-4-hydroxy-L-proline, likely a detoxification mechanism for ketoprolines. Mediates the formation of 2,5-dihydroxybenzoate (2,5-DHBA), a siderophore that chelates free cytoplasmic iron and associates with LCN2, thereby regulating iron transport and homeostasis while protecting cells against free radical-induced oxidative stress. The iron-siderophore complex is imported into mitochondria, providing an iron source for mitochondrial metabolic processes in particular heme synthesis. May act as a 3-hydroxybutyrate dehydrogenase. The sequence is that of Dehydrogenase/reductase SDR family member 6 from Rattus norvegicus (Rat).